A 387-amino-acid polypeptide reads, in one-letter code: 1-hydroxy-2-naphthoate 1,2-dioxygenasee (387 aa).

Cupin type-2 domains are found at residues 103–171 (FQLV…VWLD) and 271–337 (VQRL…VLLF).

As to quaternary structure, homohexamer. The cofactor is Fe(2+).

It catalyses the reaction 1-hydroxy-2-naphthoate + O2 = (3Z)-4-(2-carboxyphenyl)-2-oxobut-3-enoate + H(+). Dioxygenase involved in phenanthrene catabolism by mediating cleavage of 1-hydroxy-2-naphthoate. The polypeptide is 1-hydroxy-2-naphthoate 1,2-dioxygenasee (phdI) (Nocardioides sp. (strain KP7)).